A 245-amino-acid chain; its full sequence is MFKAAINAELLKDAIASLAVIVDEVRFKIKPEGISVKAVDPANVAMGIFELGSSAFEEYSADECEIGIDLNKITDLLGIADRNDTVRMELDEGSNKLLIDVGGLSYTLSLLDPSTIRAEPRVPQLELPAKVVLNGADLRRAVKAAEKISDHMLMGVSGDTFYMEAKGDTDQVRLEMGRDQLIDLKAGEACSLFSLDYLTDIVKPTNKVNEVTLSLGRDFPILIDFEIANGAGRISYLLAPRIESD.

This sequence belongs to the PCNA family. In terms of assembly, homotrimer. The subunits circularize to form a toroid; DNA passes through its center. Replication factor C (RFC) is required to load the toroid on the DNA.

Its function is as follows. Sliding clamp subunit that acts as a moving platform for DNA processing. Responsible for tethering the catalytic subunit of DNA polymerase and other proteins to DNA during high-speed replication. The sequence is that of DNA polymerase sliding clamp from Methanosarcina mazei (strain ATCC BAA-159 / DSM 3647 / Goe1 / Go1 / JCM 11833 / OCM 88) (Methanosarcina frisia).